We begin with the raw amino-acid sequence, 1101 residues long: Furin-like protease 1, isoform 1-CRR (1101 aa).

Positions 1-57 (MKNDVVRWSRQPTSNTTNSSSSSRSDSNSTHKHRSKSNKLNARQLGSNAARSCQQRS) are disordered. Positions 13-28 (TSNTTNSSSSSRSDSN) are enriched in low complexity. N-linked (GlcNAc...) asparagine glycosylation is found at Asn15, Asn18, and Asn28. A compositionally biased stretch (polar residues) spans 38 to 57 (NKLNARQLGSNAARSCQQRS). N-linked (GlcNAc...) asparagine glycosylation is present at Asn108. A helical transmembrane segment spans residues 119-139 (VFLLALQFSAVVFLCNINVGF). Positions 150–163 (SAGGSSPAAPSSAP) are enriched in low complexity. The interval 150–187 (SAGGSSPAAPSSAPSSPPTVAVPPPPPPSSALKVDPNG) is disordered. The span at 164–178 (SSPPTVAVPPPPPPS) shows a compositional bias: pro residues. An N-linked (GlcNAc...) asparagine glycan is attached at Asn333. Residues 340-654 (MWYLNRGGGL…YGLMDAAEMV (315 aa)) enclose the Peptidase S8 domain. Residues Asp372 and His413 each act as charge relay system in the active site. N-linked (GlcNAc...) asparagine glycosylation occurs at Asn426. 2 disulfide bridges follow: Cys430–Cys579 and Cys522–Cys552. Ser587 serves as the catalytic Charge relay system. N-linked (GlcNAc...) asparagine glycosylation occurs at Asn606. A P/Homo B domain is found at 662–791 (AVPEQQRCEI…DMIFYGTETP (130 aa)). The cysteines at positions 669 and 695 are disulfide-linked. Asn727 and Asn859 each carry an N-linked (GlcNAc...) asparagine glycan. The disordered stretch occupies residues 886 to 915 (EEDEQDDEVTRGPVNPYSSSPMDHSLLMSN). A compositionally biased stretch (polar residues) spans 901-915 (PYSSSPMDHSLLMSN). Asn978 carries N-linked (GlcNAc...) asparagine glycosylation. A helical transmembrane segment spans residues 1014–1034 (TVLLLVSVIFTLMGVAVAGGI).

This sequence belongs to the peptidase S8 family. Furin subfamily. Ca(2+) is required as a cofactor. As to expression, in adults, isoform 1-CRR is expressed in CNS, fat body, and female reproductive tissues, and in embryos, in anal pads, hindgut, developing antennomaxillary complex, oenocytes, clipeolabrum, pharynx, trachea, CNS and developing posterior spiracles.

Its subcellular location is the golgi apparatus membrane. It carries out the reaction Release of mature proteins from their proproteins by cleavage of -Arg-Xaa-Yaa-Arg-|-Zaa- bonds, where Xaa can be any amino acid and Yaa is Arg or Lys. Releases albumin, complement component C3 and von Willebrand factor from their respective precursors.. Functionally, furin is likely to represent the ubiquitous endoprotease activity within constitutive secretory pathways and capable of cleavage at the RX(K/R)R consensus motif. This is Furin-like protease 1, isoform 1-CRR (Fur1) from Drosophila melanogaster (Fruit fly).